The following is a 92-amino-acid chain: Small ribosomal subunit protein uS19 (92 aa).

The protein belongs to the universal ribosomal protein uS19 family.

Protein S19 forms a complex with S13 that binds strongly to the 16S ribosomal RNA. The polypeptide is Small ribosomal subunit protein uS19 (Enterococcus faecalis (strain ATCC 700802 / V583)).